Consider the following 254-residue polypeptide: Dihydroorotate dehydrogenase B (NAD(+)), electron transfer subunit (254 aa).

The region spanning 1 to 99 is the FAD-binding FR-type domain; sequence MLQTEMKVIQ…LGPLGKGFDI (99 aa). FAD is bound by residues 50 to 53, 67 to 69, and 74 to 75; these read RPIS, LYR, and GT. Residues Cys218, Cys223, Cys226, and Cys241 each contribute to the [2Fe-2S] cluster site.

It belongs to the PyrK family. Heterotetramer of 2 PyrK and 2 PyrD type B subunits. Requires [2Fe-2S] cluster as cofactor. It depends on FAD as a cofactor.

Its pathway is pyrimidine metabolism; UMP biosynthesis via de novo pathway; orotate from (S)-dihydroorotate (NAD(+) route): step 1/1. Functionally, responsible for channeling the electrons from the oxidation of dihydroorotate from the FMN redox center in the PyrD type B subunit to the ultimate electron acceptor NAD(+). The polypeptide is Dihydroorotate dehydrogenase B (NAD(+)), electron transfer subunit (Listeria monocytogenes serovar 1/2a (strain ATCC BAA-679 / EGD-e)).